A 221-amino-acid chain; its full sequence is uncharacterized protein (221 aa).

This is an uncharacterized protein from Archaeoglobus fulgidus (strain ATCC 49558 / DSM 4304 / JCM 9628 / NBRC 100126 / VC-16).